A 303-amino-acid chain; its full sequence is ATP phosphoribosyltransferase (303 aa).

This sequence belongs to the ATP phosphoribosyltransferase family. Long subfamily. The cofactor is Mg(2+).

The protein localises to the cytoplasm. It carries out the reaction 1-(5-phospho-beta-D-ribosyl)-ATP + diphosphate = 5-phospho-alpha-D-ribose 1-diphosphate + ATP. It functions in the pathway amino-acid biosynthesis; L-histidine biosynthesis; L-histidine from 5-phospho-alpha-D-ribose 1-diphosphate: step 1/9. With respect to regulation, feedback inhibited by histidine. Functionally, catalyzes the condensation of ATP and 5-phosphoribose 1-diphosphate to form N'-(5'-phosphoribosyl)-ATP (PR-ATP). Has a crucial role in the pathway because the rate of histidine biosynthesis seems to be controlled primarily by regulation of HisG enzymatic activity. The chain is ATP phosphoribosyltransferase from Stenotrophomonas maltophilia (strain R551-3).